Here is a 500-residue protein sequence, read N- to C-terminus: Lysine--tRNA ligase (500 aa).

Mg(2+) is bound by residues Glu402 and Glu409.

This sequence belongs to the class-II aminoacyl-tRNA synthetase family. Homodimer. Requires Mg(2+) as cofactor.

It is found in the cytoplasm. It carries out the reaction tRNA(Lys) + L-lysine + ATP = L-lysyl-tRNA(Lys) + AMP + diphosphate. The protein is Lysine--tRNA ligase of Buchnera aphidicola subsp. Baizongia pistaciae (strain Bp).